The sequence spans 329 residues: Small ribosomal subunit protein RACK1 (329 aa).

WD repeat units follow at residues 19–59 (GHNG…ATSP), 68–107 (GHSHFVQDVVISHDGQFALSGSWDNTLRLWDITKGVSTRL), 110–149 (GHTQDVMSVAFSSDNRQIISGSRDATIKVWNTLGECKFTL), 154–193 (AHQDWVSCIRFSPNTPTIVSGSWDNKVKIWDIKSFKCNHT), 196–235 (DHTGYVNTVTISPDGSLCASGGKDTFACLWELSSGKPLYK), 237–275 (EARNTINALAFSPNKYWLSAATDDKIIIWDLLTKQVLAE), and 295–328 (PKAPACLSLAWSADGSVLYAGYNDGLIRVYKSSS).

The protein belongs to the WD repeat G protein beta family. Ribosomal protein RACK1 subfamily.

This chain is Small ribosomal subunit protein RACK1 (gpbB), found in Dictyostelium discoideum (Social amoeba).